The chain runs to 139 residues: Centromere protein S (139 aa).

The segment at 99–139 is disordered; that stretch reads ELASSNMEQKEKKKKKSSAAKGRKTEENETPVTESEDSNMA. Residues 110–120 are compositionally biased toward basic residues; that stretch reads KKKKKSSAAKG.

This sequence belongs to the TAF9 family. CENP-S/MHF1 subfamily. Heterodimer with CENPX, sometimes called MHF; this interaction stabilizes both partners. MHF heterodimers can assemble to form tetrameric structures. MHF also coassemble with CENPT-CENPW heterodimers at centromeres to form the tetrameric CENP-T-W-S-X complex. Forms a discrete complex with FANCM and CENPX, called FANCM-MHF; this interaction, probably mediated by direct binding between CENPS and FANCM, leads to synergistic activation of double-stranded DNA binding and strongly stimulates FANCM-mediated DNA remodeling. Recruited by FANCM to the Fanconi anemia (FA) core complex, which consists of CENPS, CENPX, FANCA, FANCB, FANCC, FANCE, FANCF, FANCG, FANCL, FANCM, FAAP24 and FAAP100. The FA core complex associates with Bloom syndrome (BLM) complex, which consists of at least BLM, DNA topoisomerase 3-alpha (TOP3A), RMI1/BLAP75, RPA1/RPA70 and RPA2/RPA32. The super complex between FA and BLM is called BRAFT. Component of the CENPA-CAD complex, composed of CENPI, CENPK, CENPL, CENPO, CENPP, CENPQ, CENPR and CENPS. The CENPA-CAD complex is probably recruited on centromeres by the CENPA-NAC complex, at least composed of CENPA, CENPC, CENPH, CENPM, CENPN, CENPT and CENPU.

The protein localises to the nucleus. It is found in the chromosome. Its subcellular location is the centromere. The protein resides in the kinetochore. DNA-binding component of the Fanconi anemia (FA) core complex. Required for the normal activation of the FA pathway, leading to monoubiquitination of the FANCI-FANCD2 complex in response to DNA damage, cellular resistance to DNA cross-linking drugs, and prevention of chromosomal breakage. In complex with CENPX (MHF heterodimer), crucial cofactor for FANCM in both binding and ATP-dependent remodeling of DNA. Stabilizes FANCM. In complex with CENPX and FANCM (but not other FANC proteins), rapidly recruited to blocked forks and promotes gene conversion at blocked replication forks. In complex with CENPT, CENPW and CENPX (CENP-T-W-S-X heterotetramer), involved in the formation of a functional kinetochore outer plate, which is essential for kinetochore-microtubule attachment and faithful mitotic progression. As a component of MHF and CENP-T-W-S-X complexes, binds DNA and bends it to form a nucleosome-like structure. DNA-binding function is fulfilled in the presence of CENPX, with the following preference for DNA substates: Holliday junction &gt; double-stranded &gt; splay arm &gt; single-stranded. Does not bind DNA on its own. This Gallus gallus (Chicken) protein is Centromere protein S (CENPS).